The sequence spans 340 residues: Glyceraldehyde-3-phosphate dehydrogenase 2 (340 aa).

Residues 12-13, arginine 78, and threonine 120 contribute to the NADP(+) site; that span reads RI. D-glyceraldehyde 3-phosphate is bound by residues 151-153 and threonine 182; that span reads SCT. Catalysis depends on cysteine 152, which acts as the Nucleophile. Residue asparagine 183 coordinates NADP(+). D-glyceraldehyde 3-phosphate contacts are provided by residues arginine 197, 210-211, and arginine 233; that span reads TG. An NADP(+)-binding site is contributed by asparagine 315.

Belongs to the glyceraldehyde-3-phosphate dehydrogenase family. As to quaternary structure, homotetramer. Interacts with BrxC. In response to oxidative stress, the active site Cys likely reacts with bacillithiol (BSH) to form mixed disulfides to protect the Cys residue against overoxidation. S-bacillithiolation presumably leads to loss of catalytic activity. Debacillithiolation by monothiol bacilliredoxin BrxC restores the activity.

The protein localises to the cytoplasm. It catalyses the reaction D-glyceraldehyde 3-phosphate + phosphate + NADP(+) = (2R)-3-phospho-glyceroyl phosphate + NADPH + H(+). The enzyme catalyses D-glyceraldehyde 3-phosphate + phosphate + NAD(+) = (2R)-3-phospho-glyceroyl phosphate + NADH + H(+). The protein operates within carbohydrate biosynthesis; gluconeogenesis. Involved in the gluconeogenesis. Catalyzes the oxidative phosphorylation of glyceraldehyde 3-phosphate (G3P) to 1,3-bisphosphoglycerate (BPG) using the cofactor NADP. The first reaction step involves the formation of a hemiacetal intermediate between G3P and a cysteine residue, and this hemiacetal intermediate is then oxidized to a thioester, with concomitant reduction of NADP to NADPH. The reduced NADPH is then exchanged with the second NADP, and the thioester is attacked by a nucleophilic inorganic phosphate to produce BPG. This is Glyceraldehyde-3-phosphate dehydrogenase 2 from Bacillus subtilis (strain 168).